Reading from the N-terminus, the 474-residue chain is Transcription factor fscB (474 aa).

Disordered stretches follow at residues 114 to 153 (VDEL…SYWT) and 207 to 242 (GKEV…NPAP). Over residues 120–131 (SSDTRSSLSPSS) the composition is skewed to low complexity. Polar residues predominate over residues 132–153 (HNTTTGHETGLSSVTPPQSYWT). A compositionally biased stretch (basic and acidic residues) spans 207–221 (GKEVTKRNKRSRTEA). A compositionally biased stretch (polar residues) spans 222–240 (QEASNSPCASSTADSQTNP).

The protein belongs to the POU transcription factor family. Class-3 subfamily.

It localises to the nucleus. Its function is as follows. Transcription factor; part of the fragmented gene cluster that mediates the biosynthesis of fusarochromene, a tryptophan-derived metabolite closely related to a group of mycotoxins including fusarochromanone. The chain is Transcription factor fscB from Fusarium equiseti (Fusarium scirpi).